Reading from the N-terminus, the 365-residue chain is Sesquiterpene synthase 3 (365 aa).

Residues D117, N253, S257, and E261 each coordinate Mg(2+). Positions 117-121 (DDWSD) match the DDXXD motif motif. An NSE/DTE motif motif is present at residues 253–261 (NDILSYNRE). (2E,6E)-farnesyl diphosphate is bound by residues R341 and Y342.

Belongs to the terpene synthase family. Mg(2+) is required as a cofactor.

It catalyses the reaction (2E,6E)-farnesyl diphosphate = delta-cadinene + diphosphate. In terms of biological role, terpene cyclase that catalyzes the cyclization of farnesyl diphosphate (FPP) to various sesquiterpenes, including beta-elemene gamma-cadinene, delta-cadinene, and alpha-cadinene. The polypeptide is Sesquiterpene synthase 3 (Postia placenta (strain ATCC 44394 / Madison 698-R) (Brown rot fungus)).